Here is a 912-residue protein sequence, read N- to C-terminus: WD repeat-containing protein 44 (912 aa).

Positions 1–14 are enriched in acidic residues; it reads MASESDTEEFFDAP. Residues 1 to 25 are disordered; it reads MASESDTEEFFDAPEDVHLEGGDPI. A2 is subject to N-acetylalanine. Positions 2-170 are binding activity; it reads ASESDTEEFF…SSTAQLNVPE (169 aa). Phosphoserine is present on S3. The FFAT-like motif signature appears at 9–15; that stretch reads EFFDAPE. Phosphoserine occurs at positions 50, 66, 71, 81, 96, and 126. 2 disordered regions span residues 79–104 and 118–152; these read DDSL…GTEL and QEDS…KPVD. The span at 89-104 shows a compositional bias: polar residues; sequence QSDQATASPVTAGTEL. The residue at position 158 (T158) is a Phosphothreonine. Disordered stretches follow at residues 183–202, 207–279, 318–349, 396–422, and 457–479; these read VKES…TKDF, EVAP…PKEN, QENG…ELTD, SNDA…RLKQ, and RDEV…MPYT. The segment at 210 to 256 is important for interaction with ARHGAP26 AND ARHGAP10; the sequence is PAKPPRQLTPEPDIVASTKKPVPARPPPPANFPPPRPPPPSRPAPPP. At T218 the chain carries Phosphothreonine. Residues 232–255 show a composition bias toward pro residues; sequence PARPPPPANFPPPRPPPPSRPAPP. At S261 the chain carries Phosphoserine. A compositionally biased stretch (basic and acidic residues) spans 261-277; it reads SELEFEALKTPDLDVPK. A Phosphothreonine modification is found at T270. The tract at residues 333–346 is important for interaction with RAB11A; the sequence is VMGPQRPRSNSGRE. Residues 334 to 504 are interaction with RAB11; sequence MGPQRPRSNS…DFDQIKVVQD (171 aa). 2 positions are modified to phosphoserine: S341 and S343. Phosphothreonine is present on T348. Residues S402, S469, S470, and S471 each carry the phosphoserine modification. Residues 466–475 are compositionally biased toward acidic residues; it reads DDPSSSDDEG. Y478 carries the post-translational modification Phosphotyrosine. Residues 508 to 547 form a WD 1 repeat; it reads EHMGAVWTMKFSHCGRLLASAGQDNVVRIWALKNAFDYFN. The interval 556–592 is disordered; that stretch reads EGRVSPSPSQESLNSSKSDTDTGVCSGTDEDPDDKNA. Residues S560 and S564 each carry the phosphoserine modification. Low complexity predominate over residues 560–572; that stretch reads SPSPSQESLNSSK. 6 WD repeats span residues 604–642, 644–684, 689–728, 739–778, 783–822, and 871–912; these read GHTA…CLCC, QHID…VALW, GQTK…YHTQ, KVGR…LSMK, VNSS…SKFT, and EDAE…KNLS.

Interacts with the GTP-bound form of RAB11A when membrane-associated. Interacts with GRAF1/ARHGAP26 or GRAF2/ARHGAP10; the interaction connects the endoplasmic reticulum (ER) with the endosomal tubule. Interacts (via FFAT-like motif) with VAPA (via MSP domain) or VAPB (via MSP domain); the interaction connects the ER with the endosomal tubule. Does not bind to other Rab and Rho small G proteins. Post-translationally, phosphorylated by ATK1; the phosphorylation stabilizes its interaction with RAB11A and RAB11B. As to expression, highly expressed in brain.

It localises to the cytoplasm. It is found in the cytosol. Its subcellular location is the perinuclear region. The protein resides in the endosome membrane. The protein localises to the golgi apparatus. It localises to the trans-Golgi network. Functionally, downstream effector for Rab11 which regulates Rab11 intracellular membrane trafficking functions such as endocytic recycling, intracellular ciliogenesis and protein export. ATK1-mediated phosphorylation of WDR44 induces binding to Rab11 which activates endocytic recycling of transferrin receptor back to the plasma membrane. When bound to Rab11, prevents the formation of the ciliogenic Rab11-Rabin8/RAB3IP-RAB11FIP3 complex, therefore inhibiting preciliary trafficking and ciliogenesis. Participates in neo-synthesized protein export by connecting the endoplasmic reticulum (ER) with the endosomal tubule via direct interactions with the integral ER proteins VAPA or VAPB and the endosomal protein GRAFs (GRAF1/ARHGAP26 or GRAF2/ARHGAP10), which facilitates the transfer of proteins such as E-cadherin, MPP14 and CFTR into a Rab8-Rab10-Rab11-dependent export route. The protein is WD repeat-containing protein 44 (WDR44) of Bos taurus (Bovine).